Consider the following 325-residue polypeptide: Malate dehydrogenase (325 aa).

Residue Gly-7–Gly-13 participates in NADP(+) binding. Arg-84 and Arg-90 together coordinate substrate. Residues Asn-97 and Val-120–Asn-122 each bind NADP(+). Positions 122 and 153 each coordinate substrate. His-177 (proton acceptor) is an active-site residue.

It belongs to the LDH/MDH superfamily.

It catalyses the reaction (S)-malate + NADP(+) = oxaloacetate + NADPH + H(+). The enzyme catalyses (S)-malate + NAD(+) = oxaloacetate + NADH + H(+). Catalyzes the reversible oxidation of malate to oxaloacetate. Can use NAD(+) and NADP(+) with similar specific activity. The protein is Malate dehydrogenase of Methanothermobacter marburgensis (strain ATCC BAA-927 / DSM 2133 / JCM 14651 / NBRC 100331 / OCM 82 / Marburg) (Methanobacterium thermoautotrophicum).